The chain runs to 490 residues: Probable cytosol aminopeptidase (490 aa).

Positions 257 and 262 each coordinate Mn(2+). Residue Lys-269 is part of the active site. 3 residues coordinate Mn(2+): Asp-281, Asp-341, and Glu-343. Residue Arg-345 is part of the active site.

Belongs to the peptidase M17 family. Requires Mn(2+) as cofactor.

The protein localises to the cytoplasm. The enzyme catalyses Release of an N-terminal amino acid, Xaa-|-Yaa-, in which Xaa is preferably Leu, but may be other amino acids including Pro although not Arg or Lys, and Yaa may be Pro. Amino acid amides and methyl esters are also readily hydrolyzed, but rates on arylamides are exceedingly low.. The catalysed reaction is Release of an N-terminal amino acid, preferentially leucine, but not glutamic or aspartic acids.. Functionally, presumably involved in the processing and regular turnover of intracellular proteins. Catalyzes the removal of unsubstituted N-terminal amino acids from various peptides. The sequence is that of Probable cytosol aminopeptidase from Prochlorococcus marinus (strain MIT 9215).